The following is a 295-amino-acid chain: Ribosomal protein L11 methyltransferase (295 aa).

Positions 150, 171, 193, and 232 each coordinate S-adenosyl-L-methionine.

This sequence belongs to the methyltransferase superfamily. PrmA family.

It is found in the cytoplasm. The enzyme catalyses L-lysyl-[protein] + 3 S-adenosyl-L-methionine = N(6),N(6),N(6)-trimethyl-L-lysyl-[protein] + 3 S-adenosyl-L-homocysteine + 3 H(+). Its function is as follows. Methylates ribosomal protein L11. This chain is Ribosomal protein L11 methyltransferase, found in Neisseria meningitidis serogroup C / serotype 2a (strain ATCC 700532 / DSM 15464 / FAM18).